The following is a 411-amino-acid chain: NAD-dependent dihydropyrimidine dehydrogenase subunit PreA (411 aa).

Residues N76 and 134–136 each bind substrate; that span reads NFS. The active-site Nucleophile is C137. Residue 201 to 202 participates in substrate binding; the sequence is NT. 4Fe-4S ferredoxin-type domains are found at residues 335–367 and 369–398; these read VYPRINLDKCVGCGRCYISCYDGGHQAMEWSEK and RTPHCNTEKCVGCLLCGHVCPVGCIELGEV. 8 residues coordinate [4Fe-4S] cluster: C344, C347, C350, C354, C378, C381, C384, and C388.

The protein belongs to the dihydropyrimidine dehydrogenase family. In terms of assembly, heterotetramer of 2 PreA and 2 PreT subunits. It depends on [4Fe-4S] cluster as a cofactor.

The enzyme catalyses 5,6-dihydrouracil + NAD(+) = uracil + NADH + H(+). It carries out the reaction 5,6-dihydrothymine + NAD(+) = thymine + NADH + H(+). Its function is as follows. Involved in pyrimidine base degradation. Catalyzes physiologically the reduction of uracil to 5,6-dihydrouracil (DHU) by using NADH as a specific cosubstrate. It also catalyzes the reverse reaction and the reduction of thymine to 5,6-dihydrothymine (DHT). The protein is NAD-dependent dihydropyrimidine dehydrogenase subunit PreA (preA) of Escherichia coli O157:H7.